The following is a 248-amino-acid chain: Isoprenyl transferase (248 aa).

Residue Asp23 is part of the active site. Asp23 is a Mg(2+) binding site. Substrate is bound by residues 24–27 (GNGR), Trp28, Arg36, His40, and 68–70 (STE). Asn71 functions as the Proton acceptor in the catalytic mechanism. Substrate-binding positions include Trp72, Arg74, Arg185, and 191–193 (RIS). Residue Glu204 participates in Mg(2+) binding.

The protein belongs to the UPP synthase family. As to quaternary structure, homodimer. Mg(2+) is required as a cofactor.

Its function is as follows. Catalyzes the condensation of isopentenyl diphosphate (IPP) with allylic pyrophosphates generating different type of terpenoids. The protein is Isoprenyl transferase of Neisseria meningitidis serogroup B (strain ATCC BAA-335 / MC58).